A 242-amino-acid chain; its full sequence is Uridylate kinase (242 aa).

Residue 16 to 19 (KVSG) participates in ATP binding. Gly58 is a binding site for UMP. ATP is bound by residues Gly59 and Arg63. UMP is bound by residues Asp78 and 139–146 (TGNPFCTT). ATP-binding residues include Thr166, Gln167, Tyr172, and Asp175.

This sequence belongs to the UMP kinase family. As to quaternary structure, homohexamer.

It is found in the cytoplasm. The catalysed reaction is UMP + ATP = UDP + ADP. The protein operates within pyrimidine metabolism; CTP biosynthesis via de novo pathway; UDP from UMP (UMPK route): step 1/1. With respect to regulation, inhibited by UTP. Its function is as follows. Catalyzes the reversible phosphorylation of UMP to UDP. The protein is Uridylate kinase of Rickettsia conorii (strain ATCC VR-613 / Malish 7).